We begin with the raw amino-acid sequence, 215 residues long: Cytochrome b6 (215 aa).

Residues 32–52 (IFYCLGGITLTCFLVQVATGF) form a helical membrane-spanning segment. C35 contributes to the heme c binding site. Positions 86 and 100 each coordinate heme b. 3 helical membrane passes run 90–110 (ASMM…TGGF), 116–136 (LTWV…VTGY), and 186–206 (LHTF…FLMI). Positions 187 and 202 each coordinate heme b.

It belongs to the cytochrome b family. PetB subfamily. The 4 large subunits of the cytochrome b6-f complex are cytochrome b6, subunit IV (17 kDa polypeptide, PetD), cytochrome f and the Rieske protein, while the 4 small subunits are PetG, PetL, PetM and PetN. The complex functions as a dimer. Heme b is required as a cofactor. Requires heme c as cofactor.

The protein resides in the plastid. Its subcellular location is the chloroplast thylakoid membrane. In terms of biological role, component of the cytochrome b6-f complex, which mediates electron transfer between photosystem II (PSII) and photosystem I (PSI), cyclic electron flow around PSI, and state transitions. This is Cytochrome b6 from Klebsormidium bilatum (Filamentous green alga).